Reading from the N-terminus, the 150-residue chain is 3-hydroxyacyl-[acyl-carrier-protein] dehydratase FabZ (150 aa).

The active site involves His-53.

This sequence belongs to the thioester dehydratase family. FabZ subfamily.

The protein resides in the cytoplasm. It catalyses the reaction a (3R)-hydroxyacyl-[ACP] = a (2E)-enoyl-[ACP] + H2O. Involved in unsaturated fatty acids biosynthesis. Catalyzes the dehydration of short chain beta-hydroxyacyl-ACPs and long chain saturated and unsaturated beta-hydroxyacyl-ACPs. The protein is 3-hydroxyacyl-[acyl-carrier-protein] dehydratase FabZ of Proteus mirabilis (strain HI4320).